Reading from the N-terminus, the 528-residue chain is DEAD-box ATP-dependent RNA helicase 6 (528 aa).

2 stretches are compositionally biased toward low complexity: residues 1-15 (MNNN…PPGI) and 65-80 (QQYV…QQQQ). The disordered stretch occupies residues 1–80 (MNNNNNNRGR…GYPQQIQQQQ (80 aa)). A Q motif motif is present at residues 154–182 (NEFEDYFLKRDLLRGIYEKGFEKPSPIQE). One can recognise a Helicase ATP-binding domain in the interval 185-355 (IPIALTGSDI…DRYLKKPYII (171 aa)). 198–205 (AKNGTGKT) provides a ligand contact to ATP. The residue at position 260 (Thr-260) is a Phosphothreonine. The short motif at 303-306 (DEAD) is the DEAD box element. The 161-residue stretch at 365–525 (GVTQYYAFVE…PIPSLIDKAI (161 aa)) folds into the Helicase C-terminal domain.

This sequence belongs to the DEAD box helicase family. DDX6/DHH1 subfamily.

It localises to the cytoplasm. The protein resides in the P-body. It carries out the reaction ATP + H2O = ADP + phosphate + H(+). ATP-dependent RNA helicase involved in mRNA turnover, and more specifically in mRNA decapping. In Arabidopsis thaliana (Mouse-ear cress), this protein is DEAD-box ATP-dependent RNA helicase 6 (RH6).